The chain runs to 96 residues: MTLRPLHDKVILKREEVETRSAGGIVLTGSAATKSTRGKVIAVSTGRLLENGSVQALAVKAGDVVIFNEGYGVKSEKIDGEEVLILSENDILAIVE.

It belongs to the GroES chaperonin family. As to quaternary structure, heptamer of 7 subunits arranged in a ring. Interacts with the chaperonin GroEL.

It is found in the cytoplasm. Its function is as follows. Together with the chaperonin GroEL, plays an essential role in assisting protein folding. The GroEL-GroES system forms a nano-cage that allows encapsulation of the non-native substrate proteins and provides a physical environment optimized to promote and accelerate protein folding. GroES binds to the apical surface of the GroEL ring, thereby capping the opening of the GroEL channel. The sequence is that of Co-chaperonin GroES from Actinobacillus pleuropneumoniae serotype 3 (strain JL03).